Reading from the N-terminus, the 252-residue chain is Imidazole glycerol phosphate synthase subunit HisF (252 aa).

Residues Asp-11 and Asp-130 contribute to the active site.

It belongs to the HisA/HisF family. As to quaternary structure, heterodimer of HisH and HisF.

It localises to the cytoplasm. The catalysed reaction is 5-[(5-phospho-1-deoxy-D-ribulos-1-ylimino)methylamino]-1-(5-phospho-beta-D-ribosyl)imidazole-4-carboxamide + L-glutamine = D-erythro-1-(imidazol-4-yl)glycerol 3-phosphate + 5-amino-1-(5-phospho-beta-D-ribosyl)imidazole-4-carboxamide + L-glutamate + H(+). It participates in amino-acid biosynthesis; L-histidine biosynthesis; L-histidine from 5-phospho-alpha-D-ribose 1-diphosphate: step 5/9. In terms of biological role, IGPS catalyzes the conversion of PRFAR and glutamine to IGP, AICAR and glutamate. The HisF subunit catalyzes the cyclization activity that produces IGP and AICAR from PRFAR using the ammonia provided by the HisH subunit. The protein is Imidazole glycerol phosphate synthase subunit HisF of Bacillus mycoides (strain KBAB4) (Bacillus weihenstephanensis).